Consider the following 391-residue polypeptide: MDVDVQDDVQGRAGEGAEERAHDAARRHASVMLERCTRVLSPALDHPGAVTVDVTLGMGGHAHELLRRHPGLRLVGMDRDPQALELAAHRLHEFADRITLVHSVSDGLGEALDDLGLDTVDAVFFDLGVSSLQLDEAERGFSYARDTALDMRMDPGAPTTAADVLNTYSHSQLTRILRVYGEERFAPRIASAIVRERALEPFTSSARLVDLVRANVPAATRRTGGNPAKRTFQALRIEVNDELGVVERSLPVAFERLAPEGRLAVLTFHSLEDRIVKNALRELSSSSAPPDLPFVPAGSGPRAELLTRGGETADEAELAENPRAASARLRAVRRLPGEDRVSSPRVVPASRRRNRPGTGTAGNPARPRTQEFETHPHLEPGEPGATVERTP.

Residues 1-23 form a disordered region; sequence MDVDVQDDVQGRAGEGAEERAHD. S-adenosyl-L-methionine contacts are provided by residues 59-61, Asp78, Leu112, Asp126, and Gln133; that span reads GGH. Residues 284-391 form a disordered region; it reads SSSSAPPDLP…EPGATVERTP (108 aa). The span at 368–380 shows a compositional bias: basic and acidic residues; sequence RTQEFETHPHLEP.

It belongs to the methyltransferase superfamily. RsmH family.

The protein resides in the cytoplasm. The catalysed reaction is cytidine(1402) in 16S rRNA + S-adenosyl-L-methionine = N(4)-methylcytidine(1402) in 16S rRNA + S-adenosyl-L-homocysteine + H(+). Functionally, specifically methylates the N4 position of cytidine in position 1402 (C1402) of 16S rRNA. In Kineococcus radiotolerans (strain ATCC BAA-149 / DSM 14245 / SRS30216), this protein is Ribosomal RNA small subunit methyltransferase H.